Here is a 297-residue protein sequence, read N- to C-terminus: Palmitoyl-protein thioesterase ABHD10, mitochondrial (297 aa).

The transit peptide at 1-43 (MAAWVPCRKWGWAAVSFGRHRGLIASLARKPPWAWWLSACRQK) directs the protein to the mitochondrion. The AB hydrolase-1 domain maps to 69–181 (IIFIPGYLSN…GVVTQFHSLP (113 aa)). Catalysis depends on charge relay system residues Ser143, Asp240, and His270.

It belongs to the AB hydrolase superfamily. As to expression, expressed in epididymal sperm but not in testicular sperm (at protein level).

Its subcellular location is the mitochondrion. It catalyses the reaction S-hexadecanoyl-L-cysteinyl-[protein] + H2O = L-cysteinyl-[protein] + hexadecanoate + H(+). It carries out the reaction mycophenolic acid O-acyl-beta-D-glucuronide + H2O = mycophenolate + D-glucuronate + H(+). With respect to regulation, inhibited by palmostatin-B. Functionally, acts as an acyl-protein thioesterase that hydrolyzes fatty acids from acylated residues in proteins. Regulates the mitochondrial S-depalmitoylation of the nucleophilic active site residue of peroxiredoxin-5/PRDX5, a key antioxidant protein, therefore modulating mitochondrial antioxidant ability. Also catalyzes the deglucuronidation of mycophenolic acid acyl-glucuronide, an active metabolite of the immunosuppressant drug mycophenolate. The polypeptide is Palmitoyl-protein thioesterase ABHD10, mitochondrial (Rattus norvegicus (Rat)).